The sequence spans 356 residues: Glucose 1-dehydrogenase (356 aa).

Residues 1-26 (MDAIVVSKADRTPRLVDRPRPDPTPG) form a disordered region. Over residues 8 to 21 (KADRTPRLVDRPRP) the composition is skewed to basic and acidic residues. Asp38 is a binding site for Zn(2+). Thr40 is a substrate binding site. Residues His63 and Glu64 each coordinate Zn(2+). Positions 86-107 (TVRRPRGDPTPQFDRGQPDMAA) are disordered. The substrate site is built by Glu113 and Glu149. Glu149 serves as a coordination point for Zn(2+). NADP(+)-binding positions include 180 to 183 (NGSL), 205 to 206 (RR), 270 to 272 (LGV), and 300 to 302 (SVN). A substrate-binding site is contributed by Asn302.

The protein belongs to the zinc-containing alcohol dehydrogenase family. Glucose 1-dehydrogenase subfamily. It depends on Zn(2+) as a cofactor.

It carries out the reaction D-glucose + NAD(+) = D-glucono-1,5-lactone + NADH + H(+). It catalyses the reaction D-glucose + NADP(+) = D-glucono-1,5-lactone + NADPH + H(+). Catalyzes the NAD(P)(+)-dependent oxidation of D-glucose to D-gluconate via gluconolactone. Can utilize both NAD(+) and NADP(+) as electron acceptor. Is involved in the degradation of glucose through a modified Entner-Doudoroff pathway. The sequence is that of Glucose 1-dehydrogenase from Halobacterium salinarum (strain ATCC 700922 / JCM 11081 / NRC-1) (Halobacterium halobium).